The sequence spans 133 residues: Fluoride-specific ion channel FluC (133 aa).

4 helical membrane-spanning segments follow: residues 12-32, 41-61, 76-96, and 104-124; these read LAMTGGALGSGLRFAIGASLI, WGTLTVNLLGSFVAGVLLVWL, IVGVIGGLTTFSSLMMECLVF, and MIGIYLAVTLLAGLALVVAGA. Na(+)-binding residues include glycine 81 and threonine 84.

The protein belongs to the fluoride channel Fluc/FEX (TC 1.A.43) family.

Its subcellular location is the cell inner membrane. It carries out the reaction fluoride(in) = fluoride(out). With respect to regulation, na(+) is not transported, but it plays an essential structural role and its presence is essential for fluoride channel function. In terms of biological role, fluoride-specific ion channel. Important for reducing fluoride concentration in the cell, thus reducing its toxicity. This is Fluoride-specific ion channel FluC from Xanthomonas euvesicatoria pv. vesicatoria (strain 85-10) (Xanthomonas campestris pv. vesicatoria).